We begin with the raw amino-acid sequence, 500 residues long: Coiled-coil domain-containing protein 85A (500 aa).

Positions 1–23 (MSKAAGGSAPAAESCPSAPAGAS) are enriched in low complexity. Residues 1-30 (MSKAAGGSAPAAESCPSAPAGASTPTGVDD) form a disordered region. Coiled coils occupy residues 38–104 (ELLQ…RDLC) and 132–171 (MHKE…DEEK). 2 disordered regions span residues 200–405 (RDVG…SGMN) and 426–465 (NRML…QPEP). A compositionally biased stretch (low complexity) spans 204 to 215 (DGSSTSSTGSTD). Residues 231 to 254 (HLQKPRSEGSPEHTKHRSTSPEHL) are compositionally biased toward basic and acidic residues. A compositionally biased stretch (gly residues) spans 372–381 (GSGGSGGGSR). Over residues 383-395 (GTLRRPAQEDSSS) the composition is skewed to basic and acidic residues. A coiled-coil region spans residues 404 to 429 (MNESTLSYVRQLEARVRQLEEENRML). Positions 434–463 (FRLSSGADGNNSSLNSPASFSGHTTPSQQP) are enriched in polar residues. Asymmetric dimethylarginine is present on Arg-488.

Belongs to the CCDC85 family. As to quaternary structure, may interact with ARVCF; CTNND1; CTNND2 and PKP4.

Its subcellular location is the cell junction. The protein resides in the adherens junction. Its function is as follows. May play a role in cell-cell adhesion and epithelium development through its interaction with proteins of the beta-catenin family. This Mus musculus (Mouse) protein is Coiled-coil domain-containing protein 85A (Ccdc85a).